We begin with the raw amino-acid sequence, 954 residues long: MSRAPDTHSDFIPRHIGPSDEDQATMLAAIGAASLDALIDEVVPPRIRSRAPLALPAARSETDVLQDLKRMAARNQIYRNYIGQGYYGTHTPNVVLRNVLENPAWYTAYTPYQPEISQGRLEALLNYQTMVADLTGLDISNASLLDEGTAAAEAMTLARRGSRSSSPVFFVSQHCHPQTLEVVRTRAEGLGIELVIGDESRGLPECFGVLLQYPHSLGGVADYRELAQAAHAQGAVVACVTDLLALALIEPPGQWGADIAVGSAQRFGVPFGFGGPHAGFMACRDAYKRNMPGRLVGVSKDAQGNPALRLALQTREQHIRREKATSNICTAQVLLAVMAGLYAVWHGPRGVRRIAERVQSLTGALRAALAGLGVKVANDTWFDTLLLETGVATPAILAAADCARTNLRQVDGARLAVSLDETVTLADLQALVNVFAAGLGKDEVALPAPQASLDGIPAAVRRQGPILSHPVFSSVQSETDMLRYLRKLADKDLALDRTMIPLGSCTMKLNATAEMIPITWPEFALIHPFAPASQTPGYRELIDGLSAQLCEITGYDGISLQPNSGAQGEYAGLLAIRAYHQANGQPQRNVCLIPASAHGTNPASAQLAGMDVVVVASDANGNVDLADLRARIAQVGERLAALMITYPSTHGVFEEAVTEICDAVHEAGGQVYLDGANMNAMVGVAQPGKFGSDVSHLNLHKTFCIPHGGGGPGVGPVAVRAHLAPYLPGVLDAQGRLDPEAKVGPVSAAPYGSAGILPIPYVYIALMGAEGLRRATEVAILNANYIAARLRDHYPVLYAGRNGRVAHECILDVRPLKETSGISAEDIAKRLMDYGFHAPTMSFPVAGTLMVEPTESEGLAELERFIEAMIAIRAEIAQIESGERDRDDNVLRNAPHTAQMLLAEEWHHDYPRQQAAYPVASLRENKYWPPVARVDNAYGDRNLVCACLPVEAYA.

An N6-(pyridoxal phosphate)lysine modification is found at Lys701.

The protein belongs to the GcvP family. In terms of assembly, the glycine cleavage system is composed of four proteins: P, T, L and H. Pyridoxal 5'-phosphate serves as cofactor.

The enzyme catalyses N(6)-[(R)-lipoyl]-L-lysyl-[glycine-cleavage complex H protein] + glycine + H(+) = N(6)-[(R)-S(8)-aminomethyldihydrolipoyl]-L-lysyl-[glycine-cleavage complex H protein] + CO2. Functionally, the glycine cleavage system catalyzes the degradation of glycine. The P protein binds the alpha-amino group of glycine through its pyridoxal phosphate cofactor; CO(2) is released and the remaining methylamine moiety is then transferred to the lipoamide cofactor of the H protein. This Bordetella parapertussis (strain 12822 / ATCC BAA-587 / NCTC 13253) protein is Glycine dehydrogenase (decarboxylating).